A 295-amino-acid chain; its full sequence is Homeobox protein XHOX-7.1 (295 aa).

2 disordered regions span residues 75-115 and 134-175; these read RKPG…PISL and KPES…KPRT. Positions 84–97 are enriched in polar residues; sequence SSPTGSPLAGTSHS. The segment covering 141-153 has biased composition (low complexity); that stretch reads SSWIQSPSFSPSP. Over residues 164 to 174 the composition is skewed to basic residues; the sequence is LRKHKTNRKPR. A DNA-binding region (homeobox) is located at residues 170-229; that stretch reads NRKPRTPFTTSQLLALERKFRQKQYLSIAERAEFSSSLNLTETQVKIWFQNRRAKAKRLQ.

The protein belongs to the Msh homeobox family.

The protein resides in the nucleus. This is Homeobox protein XHOX-7.1 from Xenopus laevis (African clawed frog).